Reading from the N-terminus, the 33-residue chain is Alpha-amanitin proprotein (33 aa).

Residues 1 to 10 (MSDINATRLP) constitute a propeptide that is removed on maturation. I11 is modified ((3R,4R)-4,5-dihydroxyisoleucine; in form alpha-amanitin). Residue I11 is modified to (3R,4S)-4-hydroxyisoleucine; in form gamma-amanitin. A cross-link (cyclopeptide (Ile-Pro)) is located at residues 11–18 (IWGIGCNP). A cross-link (2'-cysteinyl-6'-hydroxytryptophan sulfoxide (Trp-Cys)) is located at residues 12 to 16 (WGIGC). P18 is modified (4-hydroxyproline). A propeptide spanning residues 19–33 (CVGDEVTALITRGEA) is cleaved from the precursor.

Belongs to the MSDIN fungal toxin family. Post-translationally, processed by the macrocyclase-peptidase enzyme POPB to yield a toxic cyclic decapeptide. POPB first removes 10 residues from the N-terminus. Conformational trapping of the remaining peptide forces the enzyme to release this intermediate rather than proceed to macrocyclization. The enzyme rebinds the remaining peptide in a different conformation and catalyzes macrocyclization of the N-terminal 8 residues.

In terms of biological role, major toxin belonging to the bicyclic octapeptides amatoxins that acts by binding non-competitively to RNA polymerase II and greatly slowing the elongation of transcripts from target promoters. The polypeptide is Alpha-amanitin proprotein (Amanita pallidorosea).